An 847-amino-acid polypeptide reads, in one-letter code: Follistatin-related protein 5 (847 aa).

Positions 1–20 (MFKCWSVVLVLGFIFLESEG) are cleaved as a signal peptide. One can recognise a Kazal-like domain in the interval 83 to 135 (GQAECACMDLCKRHYKPVCGSDGEFYENHCEVHRAACLKKQKITIVHNEDCFF). 3 disulfides stabilise this stretch: cysteine 89–cysteine 119, cysteine 93–cysteine 112, and cysteine 101–cysteine 133. EF-hand domains follow at residues 175–210 (RKKL…EELG) and 211–246 (KDLF…QVIQ). The Ca(2+) site is built by aspartate 188, aspartate 190, asparagine 192, glutamate 199, aspartate 226, asparagine 228, aspartate 230, histidine 232, and glutamate 237. Ig-like domains follow at residues 250–337 (PEDQ…IFQV) and 341–426 (PVIR…EDIS). Disulfide bonds link cysteine 270-cysteine 321 and cysteine 362-cysteine 413. Residues asparagine 318 and asparagine 394 are each glycosylated (N-linked (GlcNAc...) asparagine).

The protein localises to the secreted. This chain is Follistatin-related protein 5 (FSTL5), found in Homo sapiens (Human).